We begin with the raw amino-acid sequence, 988 residues long: UPF0182 protein MAB_3498c (988 aa).

The next 7 helical transmembrane spans lie at 19 to 39 (LVAASLVIVVLLLIGPRLVDT), 63 to 83 (LALFLIVGTLVAAVVFAGFGL), 114 to 134 (LFLIGVPILIGVLAGVVAQSY), 176 to 196 (FIAASIALIVNGLVHYIFGGI), 211 to 231 (IQLITFAGILVLLKVAAYWLD), 260 to 280 (KLILLAIAVICAVAVFSALVL), and 288 to 308 (IGLALLLLSSLVVGAGWPLIV).

It belongs to the UPF0182 family.

The protein resides in the cell membrane. The polypeptide is UPF0182 protein MAB_3498c (Mycobacteroides abscessus (strain ATCC 19977 / DSM 44196 / CCUG 20993 / CIP 104536 / JCM 13569 / NCTC 13031 / TMC 1543 / L948) (Mycobacterium abscessus)).